We begin with the raw amino-acid sequence, 504 residues long: Putative pentatricopeptide repeat-containing protein At3g28640 (504 aa).

PPR repeat units follow at residues 77 to 107, 115 to 149, 151 to 181, 182 to 216, 217 to 251, 253 to 287, 288 to 319, 320 to 350, and 356 to 390; these read NSFV…MVKE, SYLT…GVFL, DSHV…IPQP, DVVK…GLEP, DEFS…SWIE, DVFV…NVFS, WAAL…GIKP, DSVV…MEAR, and KHEH…PLAS. Residues 391-470 form a type E motif region; that stretch reads VWGALLNGCR…TPGWSVLEVD (80 aa). Residues 471–501 are type E(+) motif; it reads GNVTKFVSGDVSHPNLLQIHTVIHLLSVDAL.

This sequence belongs to the PPR family. PCMP-E subfamily.

This is Putative pentatricopeptide repeat-containing protein At3g28640 (PCMP-E79) from Arabidopsis thaliana (Mouse-ear cress).